Here is a 429-residue protein sequence, read N- to C-terminus: Transcription factor IIIA (429 aa).

The tract at residues 1 to 45 (MGGEVLNNEGMPLAELKQETIPISRSESSESLNSLTSTRSSSSNR) is disordered. Over residues 24–44 (SRSESSESLNSLTSTRSSSSN) the composition is skewed to low complexity. C2H2-type zinc fingers lie at residues 49–74 (YFCD…LSVH), 80–102 (FQCD…LYTH), 108–130 (FQCS…EVTH), 134–159 (FICP…LSVH), 163–186 (LTCP…SKHH), 194–219 (YQCT…KNDH), 222–244 (LKCP…MIIH), 253–277 (WKCH…GSIH), and 365–389 (YRCF…IDKH). Residues 406–416 (KTLVDQNHKEP) are compositionally biased toward basic and acidic residues. The disordered stretch occupies residues 406–429 (KTLVDQNHKEPFIIQKETQSAGDK).

The protein localises to the nucleus. Interacts with the internal control region (ICR) of approximately 50 bases within the 5S RNA genes, is required for correct transcription of these genes by RNA polymerase III. Also binds the transcribed 5S RNA's. In Saccharomyces cerevisiae (strain ATCC 204508 / S288c) (Baker's yeast), this protein is Transcription factor IIIA (PZF1).